A 709-amino-acid polypeptide reads, in one-letter code: Ribosomal RNA large subunit methyltransferase K/L (709 aa).

The region spanning 43–154 (LAYRITLWTR…NGVITIAMNF (112 aa)) is the THUMP domain.

Belongs to the methyltransferase superfamily. RlmKL family.

Its subcellular location is the cytoplasm. It catalyses the reaction guanosine(2445) in 23S rRNA + S-adenosyl-L-methionine = N(2)-methylguanosine(2445) in 23S rRNA + S-adenosyl-L-homocysteine + H(+). It carries out the reaction guanosine(2069) in 23S rRNA + S-adenosyl-L-methionine = N(2)-methylguanosine(2069) in 23S rRNA + S-adenosyl-L-homocysteine + H(+). Its function is as follows. Specifically methylates the guanine in position 2445 (m2G2445) and the guanine in position 2069 (m7G2069) of 23S rRNA. The chain is Ribosomal RNA large subunit methyltransferase K/L from Shewanella sp. (strain W3-18-1).